The chain runs to 735 residues: Catalase-peroxidase (735 aa).

The segment at residues 97–220 (WHAAGTYRIG…LAAVQMGLIY (124 aa)) is a cross-link (tryptophyl-tyrosyl-methioninium (Trp-Tyr) (with M-246)). The Proton acceptor role is filled by His98. The segment at residues 220–246 (YVNPEGPNGKPDPMAAAHDIRETFGRM) is a cross-link (tryptophyl-tyrosyl-methioninium (Tyr-Met) (with W-97)). His261 contacts heme b. The tract at residues 342-362 (AHQWTPKNPEAASTVPDAHDP) is disordered.

It belongs to the peroxidase family. Peroxidase/catalase subfamily. As to quaternary structure, homodimer or homotetramer. The cofactor is heme b. In terms of processing, formation of the three residue Trp-Tyr-Met cross-link is important for the catalase, but not the peroxidase activity of the enzyme.

It carries out the reaction H2O2 + AH2 = A + 2 H2O. The catalysed reaction is 2 H2O2 = O2 + 2 H2O. Bifunctional enzyme with both catalase and broad-spectrum peroxidase activity. This Gloeobacter violaceus (strain ATCC 29082 / PCC 7421) protein is Catalase-peroxidase.